Here is a 1397-residue protein sequence, read N- to C-terminus: DNA-directed RNA polymerase subunit beta' (1397 aa).

Zn(2+) contacts are provided by Cys75, Cys77, Cys90, and Cys93. Positions 465, 467, and 469 each coordinate Mg(2+). Zn(2+) is bound by residues Cys819, Cys893, Cys900, and Cys903.

The protein belongs to the RNA polymerase beta' chain family. The RNAP catalytic core consists of 2 alpha, 1 beta, 1 beta' and 1 omega subunit. When a sigma factor is associated with the core the holoenzyme is formed, which can initiate transcription. Requires Mg(2+) as cofactor. The cofactor is Zn(2+).

It carries out the reaction RNA(n) + a ribonucleoside 5'-triphosphate = RNA(n+1) + diphosphate. DNA-dependent RNA polymerase catalyzes the transcription of DNA into RNA using the four ribonucleoside triphosphates as substrates. The polypeptide is DNA-directed RNA polymerase subunit beta' (Acinetobacter baumannii (strain ACICU)).